The sequence spans 173 residues: Alpha-crystallin A chain (173 aa).

Met-1 carries the N-acetylmethionine modification. The tract at residues 1–63 (MDIAIQHPWF…RTVLDSGISE (63 aa)) is required for complex formation with BFSP1 and BFSP2. Deamidated glutamine; partial is present on Gln-6. The residue at position 45 (Ser-45) is a Phosphoserine. At Gln-50 the chain carries Deamidated glutamine; partial. The sHSP domain occupies 52–162 (LFRTVLDSGI…GHSERAIPVS (111 aa)). Residue Lys-70 is modified to N6-acetyllysine. A Deamidated glutamine; partial modification is found at Gln-90. Lys-99 is modified (N6-acetyllysine). His-100 lines the Zn(2+) pocket. Asn-101 carries the deamidated asparagine; partial modification. Glu-102 and His-107 together coordinate Zn(2+). At Ser-122 the chain carries Phosphoserine. Asn-123 is subject to Deamidated asparagine; partial. The segment at 144–173 (PKIPSGMDAGHSERAIPVSREEKPGSAPSS) is disordered. The segment covering 153–167 (GHSERAIPVSREEKP) has biased composition (basic and acidic residues). His-154 contributes to the Zn(2+) binding site. Ser-162 carries O-linked (GlcNAc) serine glycosylation.

This sequence belongs to the small heat shock protein (HSP20) family. As to quaternary structure, heteromer composed of three CRYAA and one CRYAB subunits. Inter-subunit bridging via zinc ions enhances stability, which is crucial as there is no protein turn over in the lens. Can also form homodimers and homotetramers (dimers of dimers) which serve as the building blocks of homooligomers. Within homooligomers, the zinc-binding motif is created from residues of 3 different molecules. His-100 and Glu-102 from one molecule are ligands of the zinc ion, and His-107 and His-154 residues from additional molecules complete the site with tetrahedral coordination geometry. Part of a complex required for lens intermediate filament formation composed of BFSP1, BFSP2 and CRYAA. Acetylation at Lys-70 may increase chaperone activity. In terms of processing, undergoes age-dependent proteolytical cleavage at the C-terminus.

Its subcellular location is the cytoplasm. The protein resides in the nucleus. Functionally, contributes to the transparency and refractive index of the lens. Acts as a chaperone, preventing aggregation of various proteins under a wide range of stress conditions. Required for the correct formation of lens intermediate filaments as part of a complex composed of BFSP1, BFSP2 and CRYAA. The chain is Alpha-crystallin A chain (CRYAA) from Equus caballus (Horse).